A 274-amino-acid polypeptide reads, in one-letter code: Glutamate racemase (274 aa).

Residues Asp-9–Ser-10 and Tyr-41–Gly-42 each bind substrate. Cys-72 acts as the Proton donor/acceptor in catalysis. Asn-73–Thr-74 is a binding site for substrate. Cys-184 acts as the Proton donor/acceptor in catalysis. Residue Thr-185–His-186 participates in substrate binding.

Belongs to the aspartate/glutamate racemases family.

The enzyme catalyses L-glutamate = D-glutamate. It functions in the pathway cell wall biogenesis; peptidoglycan biosynthesis. Functionally, provides the (R)-glutamate required for cell wall biosynthesis. The polypeptide is Glutamate racemase (Oceanobacillus iheyensis (strain DSM 14371 / CIP 107618 / JCM 11309 / KCTC 3954 / HTE831)).